A 714-amino-acid polypeptide reads, in one-letter code: Cyclomaltodextrin glucanotransferase (714 aa).

Positions methionine 1–alanine 27 are cleaved as a signal peptide. The segment at serine 28 to proline 165 is A1. Aspartate 54, asparagine 59, asparagine 60, glycine 78, and aspartate 80 together coordinate Ca(2+). Tyrosine 127–tryptophan 128 is a binding site for substrate. Position 166 (asparagine 166) interacts with Ca(2+). Residues asparagine 166 to histidine 229 form a b region. Histidine 167 lines the substrate pocket. Isoleucine 217 contributes to the Ca(2+) binding site. Residue asparagine 220–aspartate 223 participates in substrate binding. Aspartate 226 is a Ca(2+) binding site. Residues asparagine 230–tyrosine 434 form an A2 region. Arginine 254 contributes to the substrate binding site. The active-site Nucleophile is aspartate 256. A substrate-binding site is contributed by lysine 259–histidine 260. Histidine 260 is a binding site for Ca(2+). Catalysis depends on glutamate 285, which acts as the Proton donor. Substrate-binding residues include histidine 355, aspartate 399, and arginine 403. The segment at glycine 435–proline 523 is c. The interval glutamate 524–leucine 610 is d. Residues proline 527–phenylalanine 607 form the IPT/TIG domain. Residues valine 609–asparagine 714 enclose the CBM20 domain. Residues threonine 611–asparagine 714 form an e region.

The protein belongs to the glycosyl hydrolase 13 family. Monomer. Requires Ca(2+) as cofactor.

It localises to the secreted. The enzyme catalyses Cyclizes part of a (1-&gt;4)-alpha-D-glucan chain by formation of a (1-&gt;4)-alpha-D-glucosidic bond.. In Paenibacillus macerans (Bacillus macerans), this protein is Cyclomaltodextrin glucanotransferase (cgtM).